The chain runs to 180 residues: Small ribosomal subunit protein uS4 (180 aa).

Residues 103-174 (RRLQTIVYKK…HPERMMIEKA (72 aa)) form the S4 RNA-binding domain.

The protein belongs to the universal ribosomal protein uS4 family. Part of the 30S ribosomal subunit. Contacts protein S5. The interaction surface between S4 and S5 is involved in control of translational fidelity.

In terms of biological role, one of the primary rRNA binding proteins, it binds directly to 16S rRNA where it nucleates assembly of the body of the 30S subunit. Functionally, with S5 and S12 plays an important role in translational accuracy. This Pyrococcus horikoshii (strain ATCC 700860 / DSM 12428 / JCM 9974 / NBRC 100139 / OT-3) protein is Small ribosomal subunit protein uS4.